The sequence spans 288 residues: Protease HtpX (288 aa).

2 helical membrane-spanning segments follow: residues 4–24 (ILLF…ILTL) and 33–53 (VGLL…SLLM). His139 lines the Zn(2+) pocket. Residue Glu140 is part of the active site. Residue His143 coordinates Zn(2+). 2 helical membrane-spanning segments follow: residues 146 to 166 (SGDM…VIFI) and 186 to 206 (IYFM…SMIA). Glu214 contributes to the Zn(2+) binding site.

This sequence belongs to the peptidase M48B family. Zn(2+) is required as a cofactor.

The protein localises to the cell inner membrane. In Histophilus somni (strain 2336) (Haemophilus somnus), this protein is Protease HtpX.